The following is a 173-amino-acid chain: MSVILGIDPGSRVTGYGVIRQQGRHLIYLGSGCIRTSDLELPLRLKQIYAGVSEIITQFQPDAFAIEQVFMAKNADSALKLGQARGSAIVAAVNAELPVYEYAARLIKQAVVGTGAADKSQVQHMVQQMLKLPGKPQADAADALGVAICHANTNKTLIALAGQATSARRGRYR.

Active-site residues include D8, E67, and D139. Residues D8, E67, and D139 each contribute to the Mg(2+) site.

The protein belongs to the RuvC family. As to quaternary structure, homodimer which binds Holliday junction (HJ) DNA. The HJ becomes 2-fold symmetrical on binding to RuvC with unstacked arms; it has a different conformation from HJ DNA in complex with RuvA. In the full resolvosome a probable DNA-RuvA(4)-RuvB(12)-RuvC(2) complex forms which resolves the HJ. Requires Mg(2+) as cofactor.

It is found in the cytoplasm. It catalyses the reaction Endonucleolytic cleavage at a junction such as a reciprocal single-stranded crossover between two homologous DNA duplexes (Holliday junction).. Functionally, the RuvA-RuvB-RuvC complex processes Holliday junction (HJ) DNA during genetic recombination and DNA repair. Endonuclease that resolves HJ intermediates. Cleaves cruciform DNA by making single-stranded nicks across the HJ at symmetrical positions within the homologous arms, yielding a 5'-phosphate and a 3'-hydroxyl group; requires a central core of homology in the junction. The consensus cleavage sequence is 5'-(A/T)TT(C/G)-3'. Cleavage occurs on the 3'-side of the TT dinucleotide at the point of strand exchange. HJ branch migration catalyzed by RuvA-RuvB allows RuvC to scan DNA until it finds its consensus sequence, where it cleaves and resolves the cruciform DNA. The sequence is that of Crossover junction endodeoxyribonuclease RuvC from Vibrio cholerae serotype O1 (strain ATCC 39541 / Classical Ogawa 395 / O395).